The primary structure comprises 366 residues: UDP-N-acetylenolpyruvoylglucosamine reductase (366 aa).

The FAD-binding PCMH-type domain occupies 29 to 203 (VGPVARTLVT…LEVEFALDAS (175 aa)). The active site involves Arg-177. The Proton donor role is filled by Ser-258. Glu-358 is a catalytic residue.

This sequence belongs to the MurB family. It depends on FAD as a cofactor.

It localises to the cytoplasm. It catalyses the reaction UDP-N-acetyl-alpha-D-muramate + NADP(+) = UDP-N-acetyl-3-O-(1-carboxyvinyl)-alpha-D-glucosamine + NADPH + H(+). It participates in cell wall biogenesis; peptidoglycan biosynthesis. Its function is as follows. Cell wall formation. The sequence is that of UDP-N-acetylenolpyruvoylglucosamine reductase from Mycobacterium ulcerans (strain Agy99).